Here is a 343-residue protein sequence, read N- to C-terminus: Putative KilA-N domain-containing protein R904 (343 aa).

Residues E51–Y157 enclose the KilA-N domain. Positions A159–Y279 form a coiled coil.

This chain is Putative KilA-N domain-containing protein R904, found in Acanthamoeba polyphaga mimivirus (APMV).